Here is a 391-residue protein sequence, read N- to C-terminus: Succinate--CoA ligase [GDP-forming] subunit beta, mitochondrial (391 aa).

An ATP-grasp domain is found at 5–233 (KKIMADHGVT…NAEFRQKEIF (229 aa)). GTP-binding positions include Q16, 49–51 (GRG), and L105. 2 residues coordinate Mg(2+): N202 and D216. Residues N267 and 324–326 (GIV) each bind substrate.

Belongs to the succinate/malate CoA ligase beta subunit family. GTP-specific subunit beta subfamily. Heterodimer of an alpha and a beta subunit. The beta subunit determines specificity for GTP. Requires Mg(2+) as cofactor. Widely expressed. Not present in breast muscle.

It localises to the mitochondrion. The catalysed reaction is GTP + succinate + CoA = succinyl-CoA + GDP + phosphate. Its pathway is carbohydrate metabolism; tricarboxylic acid cycle; succinate from succinyl-CoA (ligase route): step 1/1. Its function is as follows. GTP-specific succinyl-CoA synthetase functions in the citric acid cycle (TCA), coupling the hydrolysis of succinyl-CoA to the synthesis of GTP and thus represents the only step of substrate-level phosphorylation in the TCA. The beta subunit provides nucleotide specificity of the enzyme and binds the substrate succinate, while the binding sites for coenzyme A and phosphate are found in the alpha subunit. The chain is Succinate--CoA ligase [GDP-forming] subunit beta, mitochondrial from Columba livia (Rock dove).